We begin with the raw amino-acid sequence, 62 residues long: Large ribosomal subunit protein bL35 (62 aa).

The tract at residues 25–62 is disordered; that stretch reads EQAYRSHLSQNKTTKQKRQARKSVQMHSSDVKRFKALI. Residues 53–62 show a composition bias toward basic and acidic residues; the sequence is SDVKRFKALI.

The protein belongs to the bacterial ribosomal protein bL35 family.

In Mycoplasmopsis fermentans (Mycoplasma fermentans), this protein is Large ribosomal subunit protein bL35.